Here is a 512-residue protein sequence, read N- to C-terminus: Glucose-6-phosphate 1-dehydrogenase (512 aa).

NADP(+)-binding positions include arginine 61, 103–104 (EF), and lysine 171. Residues histidine 201, lysine 205, glutamate 239, and aspartate 258 each coordinate substrate. Histidine 263 serves as the catalytic Proton acceptor. Residues lysine 360 and lysine 365 each coordinate substrate. Residues 479-512 (QDSSPSFPNYPAGSSGPKEADALIERDGRSWRPL) are disordered. Residues 496–512 (KEADALIERDGRSWRPL) are compositionally biased toward basic and acidic residues.

It belongs to the glucose-6-phosphate dehydrogenase family.

It carries out the reaction D-glucose 6-phosphate + NADP(+) = 6-phospho-D-glucono-1,5-lactone + NADPH + H(+). It participates in carbohydrate degradation; pentose phosphate pathway; D-ribulose 5-phosphate from D-glucose 6-phosphate (oxidative stage): step 1/3. Catalyzes the oxidation of glucose 6-phosphate to 6-phosphogluconolactone. This is Glucose-6-phosphate 1-dehydrogenase from Chlamydia pneumoniae (Chlamydophila pneumoniae).